An 819-amino-acid polypeptide reads, in one-letter code: Zinc finger protein 658B (819 aa).

The C2H2-type 1; degenerate zinc-finger motif lies at 141–166 (YLSDEHGKCRKSFYWKAHLIQHERPH). C2H2-type zinc fingers lie at residues 200-222 (YECNECGKAFCQNSNLSKHLRIH), 278-300 (YECIECGKTFSKTSHLRAHQRIH), 306-328 (YECVECEKTFSHKTHLSVHQRVH), 334-356 (YECNDCGKSFTYNSALRAHQRIH), 362-384 (YECSDCEKTFAHNSALRAHHRIH), 390-412 (YECNECGRSFAHISVLKAHQRIH), 418-440 (YECNECGRSFTYNSALRAHQRIH), 446-468 (YECSDCEKTFAHNSALKIHQRIH), 474-496 (YKCNECEKTFAHNSALRAHQNIH), 502-524 (YECSECGKTFFQKTRLSTHRRIH), 530-552 (YECSKCGKTFSQKSYLSGHERIH), 558-580 (YECNVCGKTFVYKAALIVHQRIH), 586-608 (YECNECGKTFSQRTHLCAHQRIH), and 614-636 (YECNECGKTFADNSALRAHHRIH). The C2H2-type 16; degenerate zinc-finger motif lies at 642 to 664 (YECNDCGKTFSKTSHLRAHLRTR). 5 consecutive C2H2-type zinc fingers follow at residues 670-692 (YECSECGKTFSEKSYVSAHQRVH), 698-720 (YECNVCGKPFAHNSTLRVHQRIH), 726-748 (YECNDCGKTFSQKSHLSAHQRIH), 754-776 (YECNECGKAFAQNSTLRVHQRIH), and 782-805 (YECDECGKTFVRKAALRVHHTRMH).

This sequence belongs to the krueppel C2H2-type zinc-finger protein family.

It localises to the nucleus. Functionally, may be involved in transcriptional regulation. The protein is Zinc finger protein 658B (ZNF658B) of Homo sapiens (Human).